The sequence spans 393 residues: 8-amino-7-oxononanoate synthase (393 aa).

108-109 (GF) is a pyridoxal 5'-phosphate binding site. His133 is a substrate binding site. Pyridoxal 5'-phosphate-binding positions include Ser182, 207 to 210 (DDAH), and 238 to 241 (TLSK). Residue Lys241 is modified to N6-(pyridoxal phosphate)lysine. A substrate-binding site is contributed by Thr355.

Belongs to the class-II pyridoxal-phosphate-dependent aminotransferase family. BioF subfamily. In terms of assembly, homodimer. Pyridoxal 5'-phosphate serves as cofactor.

The catalysed reaction is 6-carboxyhexanoyl-[ACP] + L-alanine + H(+) = (8S)-8-amino-7-oxononanoate + holo-[ACP] + CO2. It functions in the pathway cofactor biosynthesis; biotin biosynthesis. Its function is as follows. Catalyzes the decarboxylative condensation of pimeloyl-[acyl-carrier protein] and L-alanine to produce 8-amino-7-oxononanoate (AON), [acyl-carrier protein], and carbon dioxide. The protein is 8-amino-7-oxononanoate synthase of Petrotoga mobilis (strain DSM 10674 / SJ95).